A 388-amino-acid polypeptide reads, in one-letter code: Chorismate synthase (388 aa).

NADP(+) contacts are provided by Arg-39 and Arg-45. FMN is bound by residues Arg-130–Ser-132, Asn-251–Ala-252, Gly-296, Lys-311–Thr-315, and Arg-337.

The protein belongs to the chorismate synthase family. In terms of assembly, homotetramer. FMNH2 serves as cofactor.

It carries out the reaction 5-O-(1-carboxyvinyl)-3-phosphoshikimate = chorismate + phosphate. Its pathway is metabolic intermediate biosynthesis; chorismate biosynthesis; chorismate from D-erythrose 4-phosphate and phosphoenolpyruvate: step 7/7. Its function is as follows. Catalyzes the anti-1,4-elimination of the C-3 phosphate and the C-6 proR hydrogen from 5-enolpyruvylshikimate-3-phosphate (EPSP) to yield chorismate, which is the branch point compound that serves as the starting substrate for the three terminal pathways of aromatic amino acid biosynthesis. This reaction introduces a second double bond into the aromatic ring system. This chain is Chorismate synthase, found in Streptococcus thermophilus (strain CNRZ 1066).